The chain runs to 199 residues: NAD(P)H dehydrogenase (quinone) (199 aa).

The region spanning 4–190 is the Flavodoxin-like domain; the sequence is VLVLYYSTYG…DGARYQGRHV (187 aa). Residues 10 to 15 and 78 to 80 each bind FMN; these read STYGHI and TRY. Tyr-12 is an NAD(+) binding site. Substrate is bound at residue Trp-98. FMN contacts are provided by residues 113 to 119 and His-134; that span reads SSASQHG.

Belongs to the WrbA family. It depends on FMN as a cofactor.

The catalysed reaction is a quinone + NADH + H(+) = a quinol + NAD(+). It carries out the reaction a quinone + NADPH + H(+) = a quinol + NADP(+). The polypeptide is NAD(P)H dehydrogenase (quinone) (Methylobacterium sp. (strain 4-46)).